Here is a 120-residue protein sequence, read N- to C-terminus: Small ribosomal subunit protein uS13 (120 aa).

Residues 93–120 are disordered; it reads GLPVRGQNTKNNARTRKGPRRTVANKKK. Positions 105–120 are enriched in basic residues; the sequence is ARTRKGPRRTVANKKK.

Belongs to the universal ribosomal protein uS13 family. Part of the 30S ribosomal subunit. Has been shown to cross-link to S19 forming a loose heterodimer. Forms two bridges to the 50S subunit in the 70S ribosome.

Located at the top of the head of the 30S subunit, it contacts several helices of the 16S rRNA. In the 70S ribosome it contacts the 23S rRNA (bridge B1a) and protein L5 of the 50S subunit (bridge B1b), connecting the 2 subunits; these bridges are implicated in subunit movement. Contacts the tRNA in the A and P-sites. The protein is Small ribosomal subunit protein uS13 (rpsM) of Geobacillus stearothermophilus (Bacillus stearothermophilus).